The sequence spans 181 residues: Probable integrase/recombinase YoeC (181 aa).

In terms of domain architecture, Tyr recombinase spans 3 to 176; sequence IVQPIRSLEK…DEDTTRAAYK (174 aa). Catalysis depends on residues Arg-40, Lys-64, His-128, Arg-131, and His-154. The active-site O-(3'-phospho-DNA)-tyrosine intermediate is the Tyr-163.

This sequence belongs to the 'phage' integrase family.

The polypeptide is Probable integrase/recombinase YoeC (yoeC) (Bacillus subtilis (strain 168)).